We begin with the raw amino-acid sequence, 163 residues long: uncharacterized protein (163 aa).

The N-acetyltransferase domain occupies 7–162 (ISISAVKLPQ…NVVYMRLEMS (156 aa)).

Belongs to the acetyltransferase family.

Its subcellular location is the cytoplasm. The protein resides in the nucleus. This is an uncharacterized protein from Schizosaccharomyces pombe (strain 972 / ATCC 24843) (Fission yeast).